The primary structure comprises 959 residues: Mitogen-activated protein kinase kinase kinase 13 (959 aa).

Positions 1 to 47 are disordered; that stretch reads MANPQEHLSCSSLPHLPLTENKTSGGRNELAAMGNHPSPKLPEDPQE. The segment covering 7-18 has biased composition (low complexity); the sequence is HLSCSSLPHLPL. The region spanning 167–408 is the Protein kinase domain; that stretch reads ISELQWLGSG…FRQTLMHLDI (242 aa). Residues 173–181 and Lys194 contribute to the ATP site; that span reads LGSGAQGAV. Residue Asp278 is the Proton acceptor of the active site. Leucine-zipper regions lie at residues 432-453 and 485-506; these read VKKHFEKIKSEGTCIHRLDEEL and LSAIMLQLEMREKELLKREQAV. Disordered regions lie at residues 533–599, 739–828, 842–902, and 927–959; these read KRKG…GSHS, GSLD…RQRP, SSEN…LSDK, and NPVQFGDSDCDSSEGECSDATVRTSKNYSSATW. The segment covering 566-577 has biased composition (polar residues); it reads SPLSGSPKMSTA. Positions 581-593 are enriched in basic residues; the sequence is SRYRSKPRHRRGN. 2 stretches are compositionally biased toward polar residues: residues 754 to 774 and 780 to 790; these read DLSSSPAHNPLSGNAQGSERT and SGCQSGISHQF. Residues 808–820 show a composition bias toward acidic residues; sequence DSSEEEGEVDSEV. Positions 866-876 are enriched in basic and acidic residues; it reads SANRRQDRLAE. The segment covering 934–943 has biased composition (acidic residues); that stretch reads SDCDSSEGEC. Polar residues predominate over residues 947–959; it reads TVRTSKNYSSATW.

This sequence belongs to the protein kinase superfamily. STE Ser/Thr protein kinase family. MAP kinase kinase kinase subfamily. As to quaternary structure, homodimer; forms dimers through the leucine-zipper motif. Interacts with the C-terminus of MAPK8IP1 through the kinase catalytic domain. Binds PRDX3. Associates with the IKK complex through the kinase domain. It depends on Mg(2+) as a cofactor. In terms of processing, autophosphorylated on serine and threonine residues.

It is found in the cytoplasm. The protein resides in the membrane. It catalyses the reaction L-seryl-[protein] + ATP = O-phospho-L-seryl-[protein] + ADP + H(+). The enzyme catalyses L-threonyl-[protein] + ATP = O-phospho-L-threonyl-[protein] + ADP + H(+). Activated by autophosphorylation and homodimerization. Activates the JUN N-terminal pathway through activation of the MAP kinase kinase MAP2K7. Acts synergistically with PRDX3 to regulate the activation of NF-kappa-B in the cytosol. This activation is kinase-dependent and involves activating the IKK complex, the IKBKB-containing complex that phosphorylates inhibitors of NF-kappa-B. This Mus musculus (Mouse) protein is Mitogen-activated protein kinase kinase kinase 13 (Map3k13).